Reading from the N-terminus, the 957-residue chain is Glycine dehydrogenase (decarboxylating) (957 aa).

Residue K708 is modified to N6-(pyridoxal phosphate)lysine.

Belongs to the GcvP family. As to quaternary structure, the glycine cleavage system is composed of four proteins: P, T, L and H. Requires pyridoxal 5'-phosphate as cofactor.

It carries out the reaction N(6)-[(R)-lipoyl]-L-lysyl-[glycine-cleavage complex H protein] + glycine + H(+) = N(6)-[(R)-S(8)-aminomethyldihydrolipoyl]-L-lysyl-[glycine-cleavage complex H protein] + CO2. In terms of biological role, the glycine cleavage system catalyzes the degradation of glycine. The P protein binds the alpha-amino group of glycine through its pyridoxal phosphate cofactor; CO(2) is released and the remaining methylamine moiety is then transferred to the lipoamide cofactor of the H protein. The chain is Glycine dehydrogenase (decarboxylating) from Escherichia coli O81 (strain ED1a).